The following is a 279-amino-acid chain: MVDHLANTEINSQRIAAVENCFGASGQPLALPGRVLLGEGVLTKECRKKAKPRIFFLFNDILVYGSIVLSKRKYRSQHIIPLEEVTLEPLPETLQAKNRWMIKTAKKSFVVSAASTTERQEWISHIEECVRRQLLATGRQPTTEHAAPWIPDKATDICMRCTQTRFSALTRRHHCRKCGFVVCAECSRERFLLPRLSPKPLRVCSLCYRELAAQKRREEAKERFRGSPGQLTHLGSTMCGASSGDDDDSDEDREGSGDGDWPTQVEFYASGVSWSAFHS.

One can recognise a PH domain in the interval 35-131 (VLLGEGVLTK…WISHIEECVR (97 aa)). The FYVE-type zinc-finger motif lies at 152–212 (DKATDICMRC…VCSLCYRELA (61 aa)). The Zn(2+) site is built by cysteine 158, cysteine 161, cysteine 175, cysteine 178, cysteine 183, cysteine 186, cysteine 204, and cysteine 207. Positions 219–264 (EAKERFRGSPGQLTHLGSTMCGASSGDDDDSDEDREGSGDGDWPTQ) are disordered. Residues 244 to 253 (GDDDDSDEDR) are compositionally biased toward acidic residues.

Its subcellular location is the nucleus. It localises to the cytoplasm. It is found in the perinuclear region. The protein resides in the lysosome. May induce apoptosis through the lysosomal-mitochondrial pathway. Translocates to the lysosome initiating the permeabilization of lysosomal membrane (LMP) and resulting in the release of CTSD and CTSL to the cytoplasm. Triggers the caspase-independent apoptosis by altering mitochondrial membrane permeabilization (MMP) resulting in the release of PDCD8. The protein is Pleckstrin homology domain-containing family F member 1 (Plekhf1) of Rattus norvegicus (Rat).